A 301-amino-acid chain; its full sequence is ATP synthase gamma chain (301 aa).

It belongs to the ATPase gamma chain family. F-type ATPases have 2 components, CF(1) - the catalytic core - and CF(0) - the membrane proton channel. CF(1) has five subunits: alpha(3), beta(3), gamma(1), delta(1), epsilon(1). CF(0) has three main subunits: a, b and c.

The protein resides in the cell inner membrane. Produces ATP from ADP in the presence of a proton gradient across the membrane. The gamma chain is believed to be important in regulating ATPase activity and the flow of protons through the CF(0) complex. This chain is ATP synthase gamma chain, found in Helicobacter pylori (strain J99 / ATCC 700824) (Campylobacter pylori J99).